The chain runs to 734 residues: Ribosomal RNA large subunit methyltransferase K/L (734 aa).

The THUMP domain occupies 49-167 (QAYRVCMWSR…KTEHTYCLDL (119 aa)).

The protein belongs to the methyltransferase superfamily. RlmKL family.

It localises to the cytoplasm. It catalyses the reaction guanosine(2445) in 23S rRNA + S-adenosyl-L-methionine = N(2)-methylguanosine(2445) in 23S rRNA + S-adenosyl-L-homocysteine + H(+). The enzyme catalyses guanosine(2069) in 23S rRNA + S-adenosyl-L-methionine = N(2)-methylguanosine(2069) in 23S rRNA + S-adenosyl-L-homocysteine + H(+). In terms of biological role, specifically methylates the guanine in position 2445 (m2G2445) and the guanine in position 2069 (m7G2069) of 23S rRNA. In Acinetobacter baylyi (strain ATCC 33305 / BD413 / ADP1), this protein is Ribosomal RNA large subunit methyltransferase K/L.